The sequence spans 982 residues: E3 ubiquitin-protein ligase CBL-B (982 aa).

A compositionally biased stretch (low complexity) spans 1-14; it reads MASSSSSSSSTNSS. The disordered stretch occupies residues 1-25; it reads MASSSSSSSSTNSSAVTGRLPGARS. The interval 46–178 is 4H; the sequence is PPKQAAADRR…KAIFPSGQFQ (133 aa). The Cbl-PTB domain occupies 46-354; it reads PPKQAAADRR…GRSYNPDLTD (309 aa). Residues 179–251 form an EF-hand-like region; it reads GDNFRITKAD…FEFDIFTRLF (73 aa). Residues D232, T234, N236, Y238, and E243 each coordinate Ca(2+). The tract at residues 252-354 is SH2-like; sequence QPWTSILRNW…GRSYNPDLTD (103 aa). Position 297 (R297) interacts with 4-O-phospho-L-tyrosine. A linker region spans residues 355–383; that stretch reads LCEPTPHDHIKVTQEQYELYCEMGSTFQL. Residues 384–423 form an RING-type zinc finger; that stretch reads CKICAENDKDVKIEPCGHLMCTSCLTSWQESDGQGCPFCR. 3 disordered regions span residues 480–582, 709–728, and 766–911; these read MNER…RTCR, VRNS…SHPV, and LKQP…PVPR. Residues 483 to 497 are compositionally biased toward polar residues; the sequence is RQNSPVTSPGSSPLS. Positions 554–576 are enriched in pro residues; that stretch reads LPAPPPPLREPPPPPERPPPIPP. Residues 825 to 834 show a composition bias toward pro residues; that stretch reads PSQPPPPPPA. Positions 927–970 constitute a UBA domain; the sequence is SLAENVDAKIAKLMGEGFPFEEVKRALEIAQNNVDVARSILREF.

In terms of assembly, interacts with several SH3 domain-containing proteins and with poly-ubiquitinated proteins.

The protein localises to the cytoplasm. It carries out the reaction S-ubiquitinyl-[E2 ubiquitin-conjugating enzyme]-L-cysteine + [acceptor protein]-L-lysine = [E2 ubiquitin-conjugating enzyme]-L-cysteine + N(6)-ubiquitinyl-[acceptor protein]-L-lysine.. It functions in the pathway protein modification; protein ubiquitination. Its function is as follows. E3 ubiquitin-protein ligase which accepts ubiquitin from specific E2 ubiquitin-conjugating enzymes, and transfers it to substrates, generally promoting their degradation by the proteasome. This Xenopus tropicalis (Western clawed frog) protein is E3 ubiquitin-protein ligase CBL-B (cblb).